Consider the following 157-residue polypeptide: Phosphopantetheine adenylyltransferase (157 aa).

Thr8 contacts substrate. ATP is bound by residues 8-9 and His16; that span reads TF. Residues Lys40, Thr72, and Arg86 each contribute to the substrate site. ATP is bound by residues 87-89, Glu97, and 122-128; these read GLR and YSFLSSS.

The protein belongs to the bacterial CoaD family. Homohexamer. Mg(2+) is required as a cofactor.

It localises to the cytoplasm. It catalyses the reaction (R)-4'-phosphopantetheine + ATP + H(+) = 3'-dephospho-CoA + diphosphate. It participates in cofactor biosynthesis; coenzyme A biosynthesis; CoA from (R)-pantothenate: step 4/5. Its function is as follows. Reversibly transfers an adenylyl group from ATP to 4'-phosphopantetheine, yielding dephospho-CoA (dPCoA) and pyrophosphate. The sequence is that of Phosphopantetheine adenylyltransferase from Prochlorococcus marinus (strain AS9601).